A 122-amino-acid polypeptide reads, in one-letter code: NADH-quinone oxidoreductase subunit A (122 aa).

3 consecutive transmembrane segments (helical) span residues Ile-12–Ile-32, Leu-66–Ile-86, and Ile-91–Ile-111.

Belongs to the complex I subunit 3 family. As to quaternary structure, NDH-1 is composed of 14 different subunits. Subunits NuoA, H, J, K, L, M, N constitute the membrane sector of the complex.

Its subcellular location is the cell inner membrane. It carries out the reaction a quinone + NADH + 5 H(+)(in) = a quinol + NAD(+) + 4 H(+)(out). NDH-1 shuttles electrons from NADH, via FMN and iron-sulfur (Fe-S) centers, to quinones in the respiratory chain. The immediate electron acceptor for the enzyme in this species is believed to be ubiquinone. Couples the redox reaction to proton translocation (for every two electrons transferred, four hydrogen ions are translocated across the cytoplasmic membrane), and thus conserves the redox energy in a proton gradient. The protein is NADH-quinone oxidoreductase subunit A of Pelagibacter ubique (strain HTCC1062).